Here is a 189-residue protein sequence, read N- to C-terminus: Glucose-6-phosphate isomerase (189 aa).

The Fe cation site is built by histidine 88, histidine 90, glutamate 97, and histidine 136.

The protein belongs to the archaeal-type GPI family. Homodimer.

It localises to the cytoplasm. It catalyses the reaction alpha-D-glucose 6-phosphate = beta-D-fructose 6-phosphate. Its pathway is carbohydrate degradation; glycolysis; D-glyceraldehyde 3-phosphate and glycerone phosphate from D-glucose: step 2/4. This chain is Glucose-6-phosphate isomerase, found in Thermococcus onnurineus (strain NA1).